Reading from the N-terminus, the 362-residue chain is CLIP domain-containing serine protease B10 (362 aa).

The N-terminal stretch at 1–19 (MAKVVDCVLLLAFIAVVRG) is a signal peptide. The region spanning 22 to 75 (ACRTPDHRDGVCHPVQQCPSVRDEFFNSDRVLSEDEIDYLRKLQCKTKDVTICC) is the Clip domain. 3 disulfides stabilise this stretch: C23–C74, C33–C66, and C39–C75. Residues 110–361 (IIGGNYTAID…YLDWIRQNIR (252 aa)) enclose the Peptidase S1 domain. An N-linked (GlcNAc...) asparagine glycan is attached at N114. C140 and C156 are disulfide-bonded. Active-site charge relay system residues include H155 and D220. N254 carries an N-linked (GlcNAc...) asparagine glycan. Cystine bridges form between C285–C300 and C310–C337. S314 (charge relay system) is an active-site residue.

It belongs to the peptidase S1 family. CLIP subfamily. As to quaternary structure, forms a covalent heterodimer with SRPN2; the interaction inhibits CLIPB10 catalytic activity. Post-translationally, cleaved by an unknown protease into an active form.

Its subcellular location is the secreted. Inhibited by serpin SRPN2. Serine protease which preferentially cleaves after arginine residues. Involved in the innate immune response against parasite P.bergei infection by activating the melanization cascade. Probably in the hemolymph, cleaves and activates prophenoloxidase (PPO), which functions in the formation of pigments such as melanin and other polyphenolic compounds. In the susceptible strain G3, appears to be dispensable for ookinete elimination which occurs by lysis. The sequence is that of CLIP domain-containing serine protease B10 from Anopheles gambiae (African malaria mosquito).